Reading from the N-terminus, the 677-residue chain is DNA ligase (677 aa).

Residues 34 to 38 (DAQYD), 84 to 85 (SL), and E118 contribute to the NAD(+) site. K120 functions as the N6-AMP-lysine intermediate in the catalytic mechanism. 4 residues coordinate NAD(+): R141, E176, K283, and K307. Residues C403, C406, C421, and C427 each coordinate Zn(2+). The 84-residue stretch at 594 to 677 (ETASPISGKT…DLLKTVSNSE (84 aa)) folds into the BRCT domain.

The protein belongs to the NAD-dependent DNA ligase family. LigA subfamily. The cofactor is Mg(2+). Requires Mn(2+) as cofactor.

The catalysed reaction is NAD(+) + (deoxyribonucleotide)n-3'-hydroxyl + 5'-phospho-(deoxyribonucleotide)m = (deoxyribonucleotide)n+m + AMP + beta-nicotinamide D-nucleotide.. DNA ligase that catalyzes the formation of phosphodiester linkages between 5'-phosphoryl and 3'-hydroxyl groups in double-stranded DNA using NAD as a coenzyme and as the energy source for the reaction. It is essential for DNA replication and repair of damaged DNA. The sequence is that of DNA ligase from Anaplasma phagocytophilum (strain HZ).